The sequence spans 90 residues: DNA-binding protein HU-alpha (90 aa).

Belongs to the bacterial histone-like protein family. Heterodimer of an alpha and a beta chain.

Its function is as follows. Histone-like DNA-binding protein which is capable of wrapping DNA to stabilize it, and thus to prevent its denaturation under extreme environmental conditions. The polypeptide is DNA-binding protein HU-alpha (hupA) (Aeromonas hydrophila).